The chain runs to 138 residues: Large ribosomal subunit protein uL16 (138 aa).

Basic residues predominate over residues 1–18 (MALMPKRVKHRKSQRGRI). Residues 1 to 21 (MALMPKRVKHRKSQRGRIKGN) form a disordered region.

It belongs to the universal ribosomal protein uL16 family. In terms of assembly, part of the 50S ribosomal subunit.

Binds 23S rRNA and is also seen to make contacts with the A and possibly P site tRNAs. The polypeptide is Large ribosomal subunit protein uL16 (Rhodopirellula baltica (strain DSM 10527 / NCIMB 13988 / SH1)).